Reading from the N-terminus, the 385-residue chain is GPN-loop GTPase 1 (385 aa).

Residue 13–18 (GSGKTT) coordinates GTP. The short motif at 70–72 (GPN) is the Gly-Pro-Asn (GPN)-loop; involved in dimer interface element. A GTP-binding site is contributed by 173 to 176 (NKTD). Ser304, Ser308, and Ser313 each carry phosphoserine. Residues 317 to 332 (EDANDGLVDRDEDEGV) show a composition bias toward acidic residues. The segment at 317–356 (EDANDGLVDRDEDEGVEREYTFPGEERTKGEVNENSAPDL) is disordered. Residues 333-348 (EREYTFPGEERTKGEV) show a composition bias toward basic and acidic residues. Residue Ser352 is modified to Phosphoserine. Lys369 is covalently cross-linked (Glycyl lysine isopeptide (Lys-Gly) (interchain with G-Cter in ubiquitin)).

The protein belongs to the GPN-loop GTPase family. In terms of assembly, heterodimers with GPN2 or GPN3. Binds to RNA polymerase II (RNAPII) in a GTP-dependent manner. Interacts with nuclear pore protein NUP133 and nuclear export factor CRM1. Interacts with PCL1. Phosphorylated by the cyclin-CDK PCL1-PHO85.

Its subcellular location is the cytoplasm. Small GTPase required for proper nuclear import of RNA polymerase II (RNAPII). May act at an RNAP assembly step prior to nuclear import. Promotes sister chromatid separation during anaphase. This is GPN-loop GTPase 1 from Saccharomyces cerevisiae (strain ATCC 204508 / S288c) (Baker's yeast).